Reading from the N-terminus, the 581-residue chain is Arginine--tRNA ligase (581 aa).

The 'HIGH' region motif lies at 126–136 (PNLAKEMHVGH).

Belongs to the class-I aminoacyl-tRNA synthetase family. Monomer.

The protein resides in the cytoplasm. The catalysed reaction is tRNA(Arg) + L-arginine + ATP = L-arginyl-tRNA(Arg) + AMP + diphosphate. The protein is Arginine--tRNA ligase of Shewanella amazonensis (strain ATCC BAA-1098 / SB2B).